The sequence spans 2974 residues: Mediator of RNA polymerase II transcription subunit 13 (2974 aa).

Composition is skewed to basic and acidic residues over residues Glu284–Glu299, Met340–Val367, Arg374–Asp390, and Ser624–Pro633. Disordered stretches follow at residues Glu284–Thr309, Met340–Asp394, Ser624–Val654, Phe677–Ile749, Leu764–Glu801, Pro1032–Glu1063, Gly1099–Pro1134, Leu1140–Thr1159, Thr1281–Tyr1342, Gln1416–Ala1486, Glu2052–Ala2078, and Gln2247–Met2309. The stretch at Lys351–Asp396 forms a coiled coil. 2 stretches are compositionally biased toward basic residues: residues Tyr634 to Val654 and Phe677 to Pro688. Residues Pro689–Asp717 show a composition bias toward basic and acidic residues. The segment covering Ser1035–Arg1048 has biased composition (basic and acidic residues). Polar residues-rich tracts occupy residues Ile1122 to Pro1134 and Leu1140 to Ser1149. Composition is skewed to pro residues over residues Arg1284 to Met1299 and Pro1326 to Pro1340. Positions Ile1443 to Asn1464 are enriched in polar residues. Positions Ala1473 to Ala1486 are enriched in low complexity. The span at Ser2064–Asn2073 shows a compositional bias: polar residues. A coiled-coil region spans residues Ala2220–Ala2301. Basic and acidic residues-rich tracts occupy residues Gln2247–Glu2258 and Glu2281–Glu2292. Positions Trp2347–Val2974 are mediates transcriptional repression.

This sequence belongs to the Mediator complex subunit 13 family. As to quaternary structure, component of the Mediator complex.

It is found in the nucleus. Functionally, component of the Mediator complex, a coactivator involved in regulated gene transcription of nearly all RNA polymerase II-dependent genes. Mediator functions as a bridge to convey information from gene-specific regulatory proteins to the basal RNA polymerase II transcription machinery. Mediator is recruited to promoters by direct interactions with regulatory proteins and serves as a scaffold for the assembly of a functional preinitiation complex with RNA polymerase II and the general transcription factors. The chain is Mediator of RNA polymerase II transcription subunit 13 (let-19) from Caenorhabditis briggsae.